The primary structure comprises 231 residues: Urease accessory protein UreF (231 aa).

This sequence belongs to the UreF family. As to quaternary structure, ureD, UreF and UreG form a complex that acts as a GTP-hydrolysis-dependent molecular chaperone, activating the urease apoprotein by helping to assemble the nickel containing metallocenter of UreC. The UreE protein probably delivers the nickel.

It localises to the cytoplasm. In terms of biological role, required for maturation of urease via the functional incorporation of the urease nickel metallocenter. In Marinobacter nauticus (strain ATCC 700491 / DSM 11845 / VT8) (Marinobacter aquaeolei), this protein is Urease accessory protein UreF.